Consider the following 376-residue polypeptide: Thymidine kinase (376 aa).

The interval 1–44 (MASYPGHQHASAFDQAARSRGHSNRRTALRPRRQQEATEVRPEQ) is disordered. Basic residues predominate over residues 19 to 32 (SRGHSNRRTALRPR). Basic and acidic residues predominate over residues 33–44 (RQQEATEVRPEQ). 56–63 (GPHGMGKT) is an ATP binding site. Residue Glu83 is the Proton acceptor of the active site. Substrate-binding residues include Tyr101 and Gln125. Residue Arg216 coordinates ATP. Arg222 contributes to the substrate binding site. The disordered stretch occupies residues 260–280 (GQLSGTAVPPQGAEPQSNAGP).

The protein belongs to the herpesviridae thymidine kinase family. As to quaternary structure, homodimer.

It catalyses the reaction thymidine + ATP = dTMP + ADP + H(+). Its function is as follows. Catalyzes the transfer of the gamma-phospho group of ATP to thymidine to generate dTMP in the salvage pathway of pyrimidine synthesis. The dTMP serves as a substrate for DNA polymerase during viral DNA replication. Allows the virus to be reactivated and to grow in non-proliferative cells lacking a high concentration of phosphorylated nucleic acid precursors. This chain is Thymidine kinase, found in Human herpesvirus 1 (strain SC16) (HHV-1).